The chain runs to 359 residues: Fructose-bisphosphate aldolase (359 aa).

Serine 61 is a binding site for D-glyceraldehyde 3-phosphate. Catalysis depends on aspartate 109, which acts as the Proton donor. Residues histidine 110, aspartate 144, glutamate 174, and histidine 226 each coordinate Zn(2+). Residue glycine 227 coordinates dihydroxyacetone phosphate. Histidine 265 serves as a coordination point for Zn(2+). Dihydroxyacetone phosphate contacts are provided by residues 266 to 268 and 287 to 290; these read GGS and NIDT.

Belongs to the class II fructose-bisphosphate aldolase family. Zn(2+) is required as a cofactor.

The catalysed reaction is beta-D-fructose 1,6-bisphosphate = D-glyceraldehyde 3-phosphate + dihydroxyacetone phosphate. It participates in carbohydrate degradation; glycolysis; D-glyceraldehyde 3-phosphate and glycerone phosphate from D-glucose: step 4/4. Its function is as follows. Catalyzes the aldol condensation of dihydroxyacetone phosphate (DHAP or glycerone-phosphate) with glyceraldehyde 3-phosphate (G3P) to form fructose 1,6-bisphosphate (FBP) in gluconeogenesis and the reverse reaction in glycolysis. The protein is Fructose-bisphosphate aldolase (fba) of Borreliella burgdorferi (strain ATCC 35210 / DSM 4680 / CIP 102532 / B31) (Borrelia burgdorferi).